A 117-amino-acid polypeptide reads, in one-letter code: MNYDFSRELRLLTPEDYKSVFKQAHRAGSPHFTILARENSLSHPRLGLAVPKKQIKTAVGRNKFKRITRESFRNKQHSLPAKDFVVIAKKSAQELSNEDFNKLLDKLWHRLSRPSRG.

This sequence belongs to the RnpA family. In terms of assembly, consists of a catalytic RNA component (M1 or rnpB) and a protein subunit.

It carries out the reaction Endonucleolytic cleavage of RNA, removing 5'-extranucleotides from tRNA precursor.. Its function is as follows. RNaseP catalyzes the removal of the 5'-leader sequence from pre-tRNA to produce the mature 5'-terminus. It can also cleave other RNA substrates such as 4.5S RNA. The protein component plays an auxiliary but essential role in vivo by binding to the 5'-leader sequence and broadening the substrate specificity of the ribozyme. This Aliivibrio salmonicida (strain LFI1238) (Vibrio salmonicida (strain LFI1238)) protein is Ribonuclease P protein component.